Reading from the N-terminus, the 403-residue chain is ESX-5 secretion system protein EccE5 (403 aa).

Transmembrane regions (helical) follow at residues 9–29 (LALSWARLTTVFVIDLLILIV) and 43–63 (IAWWVGVGIAVLVTLLSVVTY).

It belongs to the EccE family. In terms of assembly, part of the ESX-5 / type VII secretion system (T7SS), which is composed of cytosolic and membrane components. The ESX-5 membrane complex is composed of EccB5, EccC5, EccD5 and EccE5.

The protein resides in the cell inner membrane. Functionally, part of the ESX-5 specialized secretion system, which is responsible for the secretion of EsxN and a number of PE_PGRS and PPE proteins. This chain is ESX-5 secretion system protein EccE5, found in Mycobacterium marinum (strain ATCC BAA-535 / M).